Consider the following 54-residue polypeptide: uncharacterized protein (54 aa).

Residues 1–38 are disordered; it reads MFPNSNGPNKMKALVAPSNSSTTSKTNNNNLPPNGRSS. The segment covering 17-38 has biased composition (low complexity); it reads PSNSSTTSKTNNNNLPPNGRSS.

This is an uncharacterized protein from Dictyostelium discoideum (Social amoeba).